We begin with the raw amino-acid sequence, 421 residues long: UDP-N-acetylglucosamine 1-carboxyvinyltransferase 1 (421 aa).

Position 22–23 (22–23 (KN)) interacts with phosphoenolpyruvate. UDP-N-acetyl-alpha-D-glucosamine is bound at residue Arg95. Residue Cys119 is the Proton donor of the active site. Cys119 is subject to 2-(S-cysteinyl)pyruvic acid O-phosphothioketal. Residues 124–128 (RPIEQ), Asp308, and Val330 contribute to the UDP-N-acetyl-alpha-D-glucosamine site.

It belongs to the EPSP synthase family. MurA subfamily.

It is found in the cytoplasm. It carries out the reaction phosphoenolpyruvate + UDP-N-acetyl-alpha-D-glucosamine = UDP-N-acetyl-3-O-(1-carboxyvinyl)-alpha-D-glucosamine + phosphate. The protein operates within cell wall biogenesis; peptidoglycan biosynthesis. Functionally, cell wall formation. Adds enolpyruvyl to UDP-N-acetylglucosamine. In Staphylococcus aureus (strain MRSA252), this protein is UDP-N-acetylglucosamine 1-carboxyvinyltransferase 1.